Reading from the N-terminus, the 370-residue chain is MKINNSLLNFVNGMLVTLPSSKTLTLSWNFGSMLGMVLVFQIVTGTFLAFYYTPDSLMAFSTVQYIMYEVNFGWIFRIFHFNGASLFFIFLYLHIFKGLFFMSYRLKKVWMSGLTIYLLVMMEAFMGYVLVWAQMSFWAAVVITSLLSVIPIWGPTIVTWIWSGFGVTGATLKFFFVLHFLLPWAILFIVLGHLIFLHSTGSTSSLYCHGDYDKVCFSPEYIGKDAYNIVVWLVFIVLSLIYPFNLGDAEMFIEADPMMSPVHIVPEWYFLFAYAILRAIPNKVLGVIALLMSIVTFYFFALVNNYTSCLTKLNKFLVFLFIISSVILSWLGQCMVEDPFTVLSPLFSVIYFGLAYLLLGIFMTSKLLFK.

Helical transmembrane passes span 30 to 50 (FGSM…FLAF), 74 to 96 (WIFR…LHIF), 109 to 129 (VWMS…MGYV), and 175 to 195 (FFVL…GHLI). His80 and His94 together coordinate heme b. 2 residues coordinate heme b: His179 and His193. Position 198 (His198) interacts with a ubiquinone. 4 helical membrane-spanning segments follow: residues 221-240 (YIGK…VLSL), 284-304 (VLGV…ALVN), 316-336 (FLVF…QCMV), and 342-362 (VLSP…LGIF).

This sequence belongs to the cytochrome b family. As to quaternary structure, the main subunits of complex b-c1 are: cytochrome b, cytochrome c1 and the Rieske protein. It depends on heme b as a cofactor.

It is found in the mitochondrion inner membrane. Component of the ubiquinol-cytochrome c reductase complex (complex III or cytochrome b-c1 complex) that is part of the mitochondrial respiratory chain. The b-c1 complex mediates electron transfer from ubiquinol to cytochrome c. Contributes to the generation of a proton gradient across the mitochondrial membrane that is then used for ATP synthesis. In Caenorhabditis briggsae, this protein is Cytochrome b (ctb-1).